The sequence spans 385 residues: 1-deoxy-D-xylulose 5-phosphate reductoisomerase 1 (385 aa).

Residues Thr-11, Gly-12, Ser-13, Ile-14, Asn-39, and Asn-122 each contribute to the NADPH site. Lys-123 contacts 1-deoxy-D-xylulose 5-phosphate. An NADPH-binding site is contributed by Glu-124. Asp-148 serves as a coordination point for Mn(2+). Ser-149, Glu-150, Ser-174, and His-197 together coordinate 1-deoxy-D-xylulose 5-phosphate. Glu-150 provides a ligand contact to Mn(2+). Gly-203 contributes to the NADPH binding site. Ser-210, Asn-215, Lys-216, and Glu-219 together coordinate 1-deoxy-D-xylulose 5-phosphate. Glu-219 is a Mn(2+) binding site.

This sequence belongs to the DXR family. Requires Mg(2+) as cofactor. The cofactor is Mn(2+).

It carries out the reaction 2-C-methyl-D-erythritol 4-phosphate + NADP(+) = 1-deoxy-D-xylulose 5-phosphate + NADPH + H(+). It participates in isoprenoid biosynthesis; isopentenyl diphosphate biosynthesis via DXP pathway; isopentenyl diphosphate from 1-deoxy-D-xylulose 5-phosphate: step 1/6. In terms of biological role, catalyzes the NADPH-dependent rearrangement and reduction of 1-deoxy-D-xylulose-5-phosphate (DXP) to 2-C-methyl-D-erythritol 4-phosphate (MEP). The chain is 1-deoxy-D-xylulose 5-phosphate reductoisomerase 1 from Bacillus thuringiensis subsp. konkukian (strain 97-27).